A 352-amino-acid polypeptide reads, in one-letter code: Alanine racemase (352 aa).

Catalysis depends on Lys33, which acts as the Proton acceptor; specific for D-alanine. Lys33 bears the N6-(pyridoxal phosphate)lysine mark. Arg129 contacts substrate. Tyr250 functions as the Proton acceptor; specific for L-alanine in the catalytic mechanism. Residue Met298 coordinates substrate.

This sequence belongs to the alanine racemase family. Requires pyridoxal 5'-phosphate as cofactor.

The enzyme catalyses L-alanine = D-alanine. The protein operates within amino-acid biosynthesis; D-alanine biosynthesis; D-alanine from L-alanine: step 1/1. Functionally, catalyzes the interconversion of L-alanine and D-alanine. May also act on other amino acids. The chain is Alanine racemase (alr) from Neisseria meningitidis serogroup B (strain ATCC BAA-335 / MC58).